We begin with the raw amino-acid sequence, 660 residues long: Translation factor GUF1, mitochondrial (660 aa).

The N-terminal 42 residues, 1–42 (MRSCVRTASSVLQSWRAHTVLRNGCPLPSRTLERLPRLARSY), are a transit peptide targeting the mitochondrion. The region spanning 62–242 (ERYRNFCIVA…AVVEKIPAPV (181 aa)) is the tr-type G domain. Residues 71–78 (AHVDHGKS), 135–139 (DTPGH), and 189–192 (NKVD) contribute to the GTP site.

Belongs to the TRAFAC class translation factor GTPase superfamily. Classic translation factor GTPase family. LepA subfamily.

The protein resides in the mitochondrion inner membrane. The enzyme catalyses GTP + H2O = GDP + phosphate + H(+). Promotes mitochondrial protein synthesis. May act as a fidelity factor of the translation reaction, by catalyzing a one-codon backward translocation of tRNAs on improperly translocated ribosomes. Binds to mitochondrial ribosomes in a GTP-dependent manner. This is Translation factor GUF1, mitochondrial from Phaeosphaeria nodorum (strain SN15 / ATCC MYA-4574 / FGSC 10173) (Glume blotch fungus).